We begin with the raw amino-acid sequence, 179 residues long: Inner membrane-spanning protein YciB (179 aa).

Transmembrane regions (helical) follow at residues 22–42 (IYAA…YSWV), 50–70 (MALI…FFHN), 76–96 (WKVT…QWVM), 121–141 (LAWA…AFWL), and 149–169 (FKVF…GIYI).

It belongs to the YciB family.

It localises to the cell inner membrane. Functionally, plays a role in cell envelope biogenesis, maintenance of cell envelope integrity and membrane homeostasis. This chain is Inner membrane-spanning protein YciB, found in Shigella dysenteriae serotype 1 (strain Sd197).